Here is a 159-residue protein sequence, read N- to C-terminus: Transcriptional repressor NrdR (159 aa).

A zinc finger lies at 3–34 (CPFCEYNGTRVLDSRPFNHNKSIRRRRECEAC). Residues 49–139 (LLIVKKDGTR…VYRQFKDINV (91 aa)) form the ATP-cone domain.

This sequence belongs to the NrdR family. Zn(2+) serves as cofactor.

Functionally, negatively regulates transcription of bacterial ribonucleotide reductase nrd genes and operons by binding to NrdR-boxes. The chain is Transcriptional repressor NrdR from Brevibacillus brevis (strain 47 / JCM 6285 / NBRC 100599).